Here is a 429-residue protein sequence, read N- to C-terminus: 4-hydroxy-3-methylbut-2-en-1-yl diphosphate synthase (flavodoxin) (429 aa).

[4Fe-4S] cluster-binding residues include cysteine 323, cysteine 326, cysteine 369, and glutamate 376.

It belongs to the IspG family. [4Fe-4S] cluster is required as a cofactor.

It carries out the reaction (2E)-4-hydroxy-3-methylbut-2-enyl diphosphate + oxidized [flavodoxin] + H2O + 2 H(+) = 2-C-methyl-D-erythritol 2,4-cyclic diphosphate + reduced [flavodoxin]. It participates in isoprenoid biosynthesis; isopentenyl diphosphate biosynthesis via DXP pathway; isopentenyl diphosphate from 1-deoxy-D-xylulose 5-phosphate: step 5/6. Its function is as follows. Converts 2C-methyl-D-erythritol 2,4-cyclodiphosphate (ME-2,4cPP) into 1-hydroxy-2-methyl-2-(E)-butenyl 4-diphosphate. The sequence is that of 4-hydroxy-3-methylbut-2-en-1-yl diphosphate synthase (flavodoxin) from Wolbachia sp. subsp. Brugia malayi (strain TRS).